The chain runs to 127 residues: Thioredoxin domain-containing protein 8 (127 aa).

Residues 2 to 127 form the Thioredoxin domain; sequence VKRIKNMSEL…QLEKKIQELM (126 aa). Cysteine 32 and cysteine 35 are oxidised to a cystine.

It belongs to the thioredoxin family. As to expression, testis-specific. Only expressed during spermiogenesis, prominently in the Golgi apparatus of pachytene spermatocytes and round and elongated spermatids, with a transient localization in the developing acrosome of round spermatids (at protein level).

It is found in the cytoplasm. It localises to the golgi apparatus. In terms of biological role, may be required for post-translational modifications of proteins required for acrosomal biogenesis. May act by reducing disulfide bonds within the sperm. The protein is Thioredoxin domain-containing protein 8 (Txndc8) of Mus musculus (Mouse).